We begin with the raw amino-acid sequence, 348 residues long: DnaJ homolog subfamily B member 5 (348 aa).

The 65-residue stretch at 4-68 folds into the J domain; that stretch reads DYYKILGIPS…KKRSLYDQYG (65 aa).

The sequence is that of DnaJ homolog subfamily B member 5 (Dnajb5) from Mus musculus (Mouse).